The sequence spans 542 residues: CTP synthase (542 aa).

An amidoligase domain region spans residues 1–265 (MTRFIFITGG…DTQVLKFFGM (265 aa)). Position 13 (S13) interacts with CTP. UTP is bound at residue S13. 14 to 19 (SLGKGL) is a binding site for ATP. Y54 provides a ligand contact to L-glutamine. D71 lines the ATP pocket. Mg(2+) contacts are provided by D71 and E139. Residues 146–148 (DIE), 186–191 (KTKPTQ), and K222 each bind CTP. UTP is bound by residues 186-191 (KTKPTQ) and K222. The 251-residue stretch at 291–541 (TIAVVGKYTS…IRAAIEQSRL (251 aa)) folds into the Glutamine amidotransferase type-1 domain. An L-glutamine-binding site is contributed by G353. The Nucleophile; for glutamine hydrolysis role is filled by C380. L-glutamine-binding positions include 381 to 384 (FGMQ), E404, and R469. Catalysis depends on residues H514 and E516.

It belongs to the CTP synthase family. As to quaternary structure, homotetramer.

The enzyme catalyses UTP + L-glutamine + ATP + H2O = CTP + L-glutamate + ADP + phosphate + 2 H(+). It catalyses the reaction L-glutamine + H2O = L-glutamate + NH4(+). It carries out the reaction UTP + NH4(+) + ATP = CTP + ADP + phosphate + 2 H(+). It participates in pyrimidine metabolism; CTP biosynthesis via de novo pathway; CTP from UDP: step 2/2. Its activity is regulated as follows. Allosterically activated by GTP, when glutamine is the substrate; GTP has no effect on the reaction when ammonia is the substrate. The allosteric effector GTP functions by stabilizing the protein conformation that binds the tetrahedral intermediate(s) formed during glutamine hydrolysis. Inhibited by the product CTP, via allosteric rather than competitive inhibition. Functionally, catalyzes the ATP-dependent amination of UTP to CTP with either L-glutamine or ammonia as the source of nitrogen. Regulates intracellular CTP levels through interactions with the four ribonucleotide triphosphates. This is CTP synthase from Rhodospirillum centenum (strain ATCC 51521 / SW).